The following is a 78-amino-acid chain: Acyl carrier protein (78 aa).

Residues Ser2–Val77 enclose the Carrier domain. Ser37 carries the O-(pantetheine 4'-phosphoryl)serine modification.

The protein belongs to the acyl carrier protein (ACP) family. 4'-phosphopantetheine is transferred from CoA to a specific serine of apo-ACP by AcpS. This modification is essential for activity because fatty acids are bound in thioester linkage to the sulfhydryl of the prosthetic group.

It is found in the cytoplasm. It functions in the pathway lipid metabolism; fatty acid biosynthesis. In terms of biological role, carrier of the growing fatty acid chain in fatty acid biosynthesis. This Cytophaga hutchinsonii (strain ATCC 33406 / DSM 1761 / CIP 103989 / NBRC 15051 / NCIMB 9469 / D465) protein is Acyl carrier protein.